A 394-amino-acid polypeptide reads, in one-letter code: Elongation factor Tu (394 aa).

The 195-residue stretch at 10-204 (KPHVNVGTIG…AVDSYIPQPE (195 aa)) folds into the tr-type G domain. Positions 19-26 (GHVDHGKT) are G1. 19-26 (GHVDHGKT) contributes to the GTP binding site. Mg(2+) is bound at residue Thr26. The G2 stretch occupies residues 60–64 (GITIS). The tract at residues 81 to 84 (DCPG) is G3. GTP is bound by residues 81–85 (DCPGH) and 136–139 (NKCD). Positions 136–139 (NKCD) are G4. The G5 stretch occupies residues 174 to 176 (SAV).

This sequence belongs to the TRAFAC class translation factor GTPase superfamily. Classic translation factor GTPase family. EF-Tu/EF-1A subfamily. As to quaternary structure, monomer.

The protein localises to the cytoplasm. It catalyses the reaction GTP + H2O = GDP + phosphate + H(+). Functionally, GTP hydrolase that promotes the GTP-dependent binding of aminoacyl-tRNA to the A-site of ribosomes during protein biosynthesis. This is Elongation factor Tu from Akkermansia muciniphila (strain ATCC BAA-835 / DSM 22959 / JCM 33894 / BCRC 81048 / CCUG 64013 / CIP 107961 / Muc).